We begin with the raw amino-acid sequence, 315 residues long: Carbamate kinase (315 aa).

Belongs to the carbamate kinase family. Homodimer.

It localises to the cytoplasm. The enzyme catalyses hydrogencarbonate + NH4(+) + ATP = carbamoyl phosphate + ADP + H2O + H(+). This chain is Carbamate kinase (cpkA), found in Thermococcus kodakarensis (strain ATCC BAA-918 / JCM 12380 / KOD1) (Pyrococcus kodakaraensis (strain KOD1)).